The chain runs to 1200 residues: PAN2-PAN3 deadenylation complex catalytic subunit Pan2 (1200 aa).

WD repeat units lie at residues 153–193, 195–231, 244–280, and 328–367; these read DENE…QKYA, ETPGVTIMRQTNRFFFCGHTSGKVSLRDLRSFKVEHE, VHGNLLAACGFSSRLTGLACDRFLKVYDLRMMRAITP, and PVGPLLMTFDVSASKQALAFGDSEGCVHLWTDSPEPSFNP. The linker stretch occupies residues 368–484; the sequence is YSRETEFALP…PTGREEEPLH (117 aa). One can recognise a USP domain in the interval 485 to 923; that stretch reads TVSKKYRKVT…VPAILYYVKR (439 aa). A Phosphoserine modification is found at S784. The region spanning 974–1146 is the Exonuclease domain; that stretch reads VGLDAEFVTL…EDARTALQLY (173 aa). Positions 977, 979, 1086, and 1138 each coordinate a divalent metal cation. S1188 is modified (phosphoserine).

Belongs to the peptidase C19 family. PAN2 subfamily. In terms of assembly, forms a heterotrimer with an asymmetric homodimer of the regulatory subunit PAN3 to form the poly(A)-nuclease (PAN) deadenylation complex. Interacts with PAN3 isoform 1/Pan3L and isoform 3/Pan3S. Interacts with ZFP36. Requires a divalent metal cation as cofactor.

Its subcellular location is the cytoplasm. It localises to the P-body. The protein resides in the nucleus. The catalysed reaction is Exonucleolytic cleavage of poly(A) to 5'-AMP.. With respect to regulation, positively regulated by the regulatory subunit PAN3. Catalytic subunit of the poly(A)-nuclease (PAN) deadenylation complex, one of two cytoplasmic mRNA deadenylases involved in general and miRNA-mediated mRNA turnover. PAN specifically shortens poly(A) tails of RNA and the activity is stimulated by poly(A)-binding protein (PABP). PAN deadenylation is followed by rapid degradation of the shortened mRNA tails by the CCR4-NOT complex. Deadenylated mRNAs are then degraded by two alternative mechanisms, namely exosome-mediated 3'-5' exonucleolytic degradation, or deadenylation-dependent mRNA decaping and subsequent 5'-3' exonucleolytic degradation by XRN1. Also acts as an important regulator of the HIF1A-mediated hypoxic response. Required for HIF1A mRNA stability independent of poly(A) tail length regulation. This is PAN2-PAN3 deadenylation complex catalytic subunit Pan2 from Mus musculus (Mouse).